A 241-amino-acid chain; its full sequence is Uridylate kinase (241 aa).

15 to 18 (KLSG) contacts ATP. Residues 23 to 28 (GAEGFG) form an involved in allosteric activation by GTP region. Residue glycine 57 participates in UMP binding. 2 residues coordinate ATP: glycine 58 and arginine 62. UMP contacts are provided by residues aspartate 77 and 138–145 (TGNPFFTT). ATP contacts are provided by threonine 165, tyrosine 171, and aspartate 174.

Belongs to the UMP kinase family. As to quaternary structure, homohexamer.

The protein resides in the cytoplasm. The catalysed reaction is UMP + ATP = UDP + ADP. The protein operates within pyrimidine metabolism; CTP biosynthesis via de novo pathway; UDP from UMP (UMPK route): step 1/1. With respect to regulation, allosterically activated by GTP. Inhibited by UTP. Its function is as follows. Catalyzes the reversible phosphorylation of UMP to UDP. This Yersinia pseudotuberculosis serotype O:1b (strain IP 31758) protein is Uridylate kinase.